The sequence spans 456 residues: MLITTVHGQQIEINNIDTNHGYLLFSDKPVQIPSSFEHHCLRINLTEIDTIADYFEQRLRTDYHAPQVKFLYNKMRRELAGIALRHRNKRGLINIVGSVFKYLFGTLDENDRVDIQRKLETNAHNSVNLHELNDAIQLINDGMQKIQNYENNSNIINSLLYELMQFTEYIEDVEMGMQLSRLGLFNPKLLNYDKLENVNSQNILNIKTSTWINYNDNQLLIISHIPINFSLINTVKIIPYPDSNGYQLEYTDTQSYFERENKVYNNENKEINNECVTNIIKHLKPICNFESIHTDEIIKYIEPNTIVTWNLTQTSLKQNCQNSFNNIKIKGNKMIKVTQCKIEINSIILSENLFKPEIDLTPLYTPLNITKIKTVKHNDINEMISQNNITLYIFMTTVIIILILLYLYLRYVSFNPFMMLYAKLKLRKNQNQNTAQQIEMEDVPLPLLYPSIPAQV.

Residues asparagine 44, asparagine 151, asparagine 228, asparagine 310, asparagine 368, and asparagine 388 are each glycosylated (N-linked (GlcNAc...) asparagine).

The sequence is that of Retrovirus-related Env polyprotein from copia-like transposable element 17.6 (env) from Drosophila melanogaster (Fruit fly).